Reading from the N-terminus, the 204-residue chain is ADP-ribosylation factor-like protein 15 (204 aa).

Residues 39 to 46, 82 to 86, and 142 to 145 contribute to the GTP site; these read GLTGSGKT, ELGGA, and NHQD.

The protein belongs to the small GTPase superfamily. Arf family.

The polypeptide is ADP-ribosylation factor-like protein 15 (ARL15) (Pongo abelii (Sumatran orangutan)).